The sequence spans 248 residues: UPF0736 protein BC_1176 (248 aa).

Belongs to the UPF0736 family.

This Bacillus cereus (strain ATCC 14579 / DSM 31 / CCUG 7414 / JCM 2152 / NBRC 15305 / NCIMB 9373 / NCTC 2599 / NRRL B-3711) protein is UPF0736 protein BC_1176.